Here is a 643-residue protein sequence, read N- to C-terminus: Pescadillo homolog (643 aa).

A BRCT domain is found at 319–412; that stretch reads KLKTLFKGLK…RLLPTNKYFM (94 aa). Disordered regions lie at residues 437–475, 492–571, and 609–643; these read AARK…PENE, TDSL…YREN, and DKNA…QILA. Residues 464–475 are compositionally biased toward acidic residues; sequence SDDEEVQDPENE. Positions 492–518 are enriched in basic and acidic residues; that stretch reads TDSLNSGKKEGADDATDNGKDAAEKKQ. The segment covering 524-544 has biased composition (acidic residues); that stretch reads GESDDEDEEEEDDDDGEEEED. The stretch at 569–643 forms a coiled coil; sequence RENEAEKKIV…QKQQRKQILA (75 aa). Basic and acidic residues predominate over residues 609–635; sequence DKNARLLANKRERIEKQKRAEQMEKQK.

This sequence belongs to the pescadillo family.

The protein localises to the nucleus. It localises to the nucleolus. The protein resides in the nucleoplasm. Functionally, required for maturation of ribosomal RNAs and formation of the large ribosomal subunit. This Anopheles gambiae (African malaria mosquito) protein is Pescadillo homolog.